The primary structure comprises 225 residues: Cytidylate kinase (225 aa).

12–20 (GPSGAGKGT) contacts ATP.

This sequence belongs to the cytidylate kinase family. Type 1 subfamily.

The protein resides in the cytoplasm. It catalyses the reaction CMP + ATP = CDP + ADP. The enzyme catalyses dCMP + ATP = dCDP + ADP. The protein is Cytidylate kinase of Vibrio cholerae serotype O1 (strain ATCC 39315 / El Tor Inaba N16961).